A 188-amino-acid chain; its full sequence is MGIDIRHNKDRKVRRKEPKSQDIYLRLLVKLYRFLARRTNSSFNRVVLKRLFMSRTNRPPLSMSRLIRKMKLQGRENKTAVVVGYITDDVRIHDIPKLKVCALKITSGDRSRILKSGGQIMTFDQLALAAPKGQNTVLLSGPRKAREVYRHFGKAPGTPHSRTKPYVLSKGRKFERARGRRASRGYKN.

Positions 153–188 are disordered; sequence GKAPGTPHSRTKPYVLSKGRKFERARGRRASRGYKN. Over residues 178–188 the composition is skewed to basic residues; that stretch reads RGRRASRGYKN.

It belongs to the eukaryotic ribosomal protein eL18 family. Component of the large ribosomal subunit.

The protein localises to the cytoplasm. It localises to the cytosol. The protein resides in the rough endoplasmic reticulum. Component of the large ribosomal subunit. The ribosome is a large ribonucleoprotein complex responsible for the synthesis of proteins in the cell. This chain is Large ribosomal subunit protein eL18B (rpl18-b), found in Xenopus laevis (African clawed frog).